The following is a 94-amino-acid chain: Integration host factor subunit beta (94 aa).

Belongs to the bacterial histone-like protein family. As to quaternary structure, heterodimer of an alpha and a beta chain.

In terms of biological role, this protein is one of the two subunits of integration host factor, a specific DNA-binding protein that functions in genetic recombination as well as in transcriptional and translational control. The chain is Integration host factor subunit beta from Roseobacter denitrificans (strain ATCC 33942 / OCh 114) (Erythrobacter sp. (strain OCh 114)).